Consider the following 484-residue polypeptide: Threonine synthase-like 2 (484 aa).

K113 carries the N6-(pyridoxal phosphate)lysine modification.

This sequence belongs to the threonine synthase family. The cofactor is pyridoxal 5'-phosphate.

Functionally, acts as a catabolic phospho-lyase on both gamma- and beta-phosphorylated substrates. Degrades O-phospho-threonine (PThr) to alpha-ketobutyrate, ammonia and phosphate. This is Threonine synthase-like 2 (THNSL2) from Pongo abelii (Sumatran orangutan).